The sequence spans 166 residues: Regulatory protein RecX (166 aa).

This sequence belongs to the RecX family.

It is found in the cytoplasm. Modulates RecA activity. This is Regulatory protein RecX from Shigella boydii serotype 4 (strain Sb227).